The chain runs to 378 residues: uncharacterized protein (378 aa).

Helical transmembrane passes span 7–29, 33–55, 68–85, 90–108, 115–137, 152–174, 204–225, 245–267, 280–302, and 347–366; these read VTPFFFALALLNLLISLFIRLSQ, LFFVSLVFGFVGLTLMGAMYQII, VSYLVFFLILVSFYEFYT, SGSLFLFLGSLIFFFHLLL, PLTVRFLLASMIYLVLSALFLYL, LTVGSMLNAIYGVELAWIPMLIM, NYKLIALAGLLEFGVALYFLYL, IFLFALLFLPLGMLLGIFSASHA, LILYGFGAFTIFGGMLHLLPRIV, and FSPLHVISTVVYLVIMALFL.

The protein resides in the cell membrane. This is an uncharacterized protein from Aquifex aeolicus (strain VF5).